A 58-amino-acid polypeptide reads, in one-letter code: UPF0391 membrane protein Sbal_1421 (58 aa).

Transmembrane regions (helical) follow at residues 6–26 (LVFL…IAGA) and 28–48 (AGIA…SLLV).

This sequence belongs to the UPF0391 family.

The protein resides in the cell membrane. This Shewanella baltica (strain OS155 / ATCC BAA-1091) protein is UPF0391 membrane protein Sbal_1421.